Here is a 441-residue protein sequence, read N- to C-terminus: tRNA(Ile)-lysidine synthase (441 aa).

28–33 (SGGTDS) contributes to the ATP binding site.

The protein belongs to the tRNA(Ile)-lysidine synthase family.

It is found in the cytoplasm. It catalyses the reaction cytidine(34) in tRNA(Ile2) + L-lysine + ATP = lysidine(34) in tRNA(Ile2) + AMP + diphosphate + H(+). Its function is as follows. Ligates lysine onto the cytidine present at position 34 of the AUA codon-specific tRNA(Ile) that contains the anticodon CAU, in an ATP-dependent manner. Cytidine is converted to lysidine, thus changing the amino acid specificity of the tRNA from methionine to isoleucine. This chain is tRNA(Ile)-lysidine synthase, found in Orientia tsutsugamushi (strain Boryong) (Rickettsia tsutsugamushi).